The primary structure comprises 369 residues: tRNA/tmRNA (uracil-C(5))-methyltransferase (369 aa).

S-adenosyl-L-methionine-binding residues include Q190, Y218, N223, E239, and D301. Residue C326 is the Nucleophile of the active site. Residue E360 is the Proton acceptor of the active site.

The protein belongs to the class I-like SAM-binding methyltransferase superfamily. RNA M5U methyltransferase family. TrmA subfamily.

The catalysed reaction is uridine(54) in tRNA + S-adenosyl-L-methionine = 5-methyluridine(54) in tRNA + S-adenosyl-L-homocysteine + H(+). It carries out the reaction uridine(341) in tmRNA + S-adenosyl-L-methionine = 5-methyluridine(341) in tmRNA + S-adenosyl-L-homocysteine + H(+). In terms of biological role, dual-specificity methyltransferase that catalyzes the formation of 5-methyluridine at position 54 (m5U54) in all tRNAs, and that of position 341 (m5U341) in tmRNA (transfer-mRNA). This is tRNA/tmRNA (uracil-C(5))-methyltransferase from Vibrio vulnificus (strain CMCP6).